An 894-amino-acid chain; its full sequence is Leucine--tRNA ligase, mitochondrial (894 aa).

The transit peptide at 1–9 directs the protein to the mitochondrion; the sequence is MLPRPSSRF. A 'HIGH' region motif is present at residues 56–66; that stretch reads PYPSGVLHIGH. The short motif at 646–650 is the 'KMSKS' region element; it reads KMSKS. Lys649 is a binding site for ATP.

The protein belongs to the class-I aminoacyl-tRNA synthetase family.

The protein localises to the mitochondrion matrix. The catalysed reaction is tRNA(Leu) + L-leucine + ATP = L-leucyl-tRNA(Leu) + AMP + diphosphate. The sequence is that of Leucine--tRNA ligase, mitochondrial (NAM2) from Saccharomyces paradoxus (Yeast).